A 269-amino-acid chain; its full sequence is Monofunctional glycosyltransferase (269 aa).

The chain crosses the membrane as a helical span at residues 46 to 66; it reads ILLTILIIIALFIGIMYFLST.

The protein belongs to the glycosyltransferase 51 family.

It is found in the cell membrane. It catalyses the reaction [GlcNAc-(1-&gt;4)-Mur2Ac(oyl-L-Ala-gamma-D-Glu-L-Lys-D-Ala-D-Ala)](n)-di-trans,octa-cis-undecaprenyl diphosphate + beta-D-GlcNAc-(1-&gt;4)-Mur2Ac(oyl-L-Ala-gamma-D-Glu-L-Lys-D-Ala-D-Ala)-di-trans,octa-cis-undecaprenyl diphosphate = [GlcNAc-(1-&gt;4)-Mur2Ac(oyl-L-Ala-gamma-D-Glu-L-Lys-D-Ala-D-Ala)](n+1)-di-trans,octa-cis-undecaprenyl diphosphate + di-trans,octa-cis-undecaprenyl diphosphate + H(+). It functions in the pathway cell wall biogenesis; peptidoglycan biosynthesis. In terms of biological role, peptidoglycan polymerase that catalyzes glycan chain elongation using lipid-linked disaccharide-pentapeptide as the substrate. The chain is Monofunctional glycosyltransferase from Staphylococcus aureus (strain JH1).